The chain runs to 324 residues: Lipoyl synthase (324 aa).

[4Fe-4S] cluster is bound by residues C72, C77, C83, C98, C102, C105, and S313. The Radical SAM core domain maps to 84-302 (FRFGTASFMI…AQEGKKMGFL (219 aa)).

Belongs to the radical SAM superfamily. Lipoyl synthase family. It depends on [4Fe-4S] cluster as a cofactor.

It is found in the cytoplasm. The catalysed reaction is [[Fe-S] cluster scaffold protein carrying a second [4Fe-4S](2+) cluster] + N(6)-octanoyl-L-lysyl-[protein] + 2 oxidized [2Fe-2S]-[ferredoxin] + 2 S-adenosyl-L-methionine + 4 H(+) = [[Fe-S] cluster scaffold protein] + N(6)-[(R)-dihydrolipoyl]-L-lysyl-[protein] + 4 Fe(3+) + 2 hydrogen sulfide + 2 5'-deoxyadenosine + 2 L-methionine + 2 reduced [2Fe-2S]-[ferredoxin]. It participates in protein modification; protein lipoylation via endogenous pathway; protein N(6)-(lipoyl)lysine from octanoyl-[acyl-carrier-protein]: step 2/2. Functionally, catalyzes the radical-mediated insertion of two sulfur atoms into the C-6 and C-8 positions of the octanoyl moiety bound to the lipoyl domains of lipoate-dependent enzymes, thereby converting the octanoylated domains into lipoylated derivatives. The protein is Lipoyl synthase of Dichelobacter nodosus (strain VCS1703A).